Reading from the N-terminus, the 278-residue chain is Phosphatidylglycerol--prolipoprotein diacylglyceryl transferase (278 aa).

4 helical membrane passes run 19-39, 49-69, 86-106, and 112-132; these read WYGILMATGVLVATLMAINEG, FIDFLLWAVPIGFIGARIYYV, IWNGGIAIYGGLIAGLIVLLI, and MLPPFLMLDIIAPGVMAAQVI. Arg-134 lines the a 1,2-diacyl-sn-glycero-3-phospho-(1'-sn-glycerol) pocket. A run of 3 helical transmembrane segments spans residues 174–194, 204–224, and 235–255; these read QPTYLYESTLNLIGLILILSL, GEIFLSYVIWYSAVRFFVEGM, and IRVSQALSLILFFGAIILWIY.

Belongs to the Lgt family.

Its subcellular location is the cell membrane. It catalyses the reaction L-cysteinyl-[prolipoprotein] + a 1,2-diacyl-sn-glycero-3-phospho-(1'-sn-glycerol) = an S-1,2-diacyl-sn-glyceryl-L-cysteinyl-[prolipoprotein] + sn-glycerol 1-phosphate + H(+). It functions in the pathway protein modification; lipoprotein biosynthesis (diacylglyceryl transfer). Functionally, catalyzes the transfer of the diacylglyceryl group from phosphatidylglycerol to the sulfhydryl group of the N-terminal cysteine of a prolipoprotein, the first step in the formation of mature lipoproteins. This Lactobacillus johnsonii (strain CNCM I-12250 / La1 / NCC 533) protein is Phosphatidylglycerol--prolipoprotein diacylglyceryl transferase.